Reading from the N-terminus, the 273-residue chain is Putative peptidyl-prolyl cis-trans isomerase Cbf2 (273 aa).

Positions 1-21 (MKKFSLVAATLIAGVVLNVNA) are cleaved as a signal peptide. The 98-residue stretch at 131-228 (PARVQAKHIL…FGYHVILKEN (98 aa)) folds into the PpiC domain.

The catalysed reaction is [protein]-peptidylproline (omega=180) = [protein]-peptidylproline (omega=0). The protein is Putative peptidyl-prolyl cis-trans isomerase Cbf2 (cbf2) of Campylobacter jejuni subsp. jejuni serotype O:2 (strain ATCC 700819 / NCTC 11168).